Here is a 252-residue protein sequence, read N- to C-terminus: Large ribosomal subunit protein uL4 (252 aa).

It belongs to the universal ribosomal protein uL4 family. Part of the 50S ribosomal subunit.

Its function is as follows. One of the primary rRNA binding proteins, this protein initially binds near the 5'-end of the 23S rRNA. It is important during the early stages of 50S assembly. It makes multiple contacts with different domains of the 23S rRNA in the assembled 50S subunit and ribosome. Forms part of the polypeptide exit tunnel. The sequence is that of Large ribosomal subunit protein uL4 from Methanococcus vannielii (strain ATCC 35089 / DSM 1224 / JCM 13029 / OCM 148 / SB).